The primary structure comprises 330 residues: D-alanine--D-alanine ligase (330 aa).

The ATP-grasp domain occupies 120–326 (KLWYDALGIP…FKTFLQKAVL (207 aa)). Position 150–205 (150–205 (AFKQWGGLFVKAACQGSSVGCYKVTSEEELAQAINGAFGYSQQVLVEKAVKPRELE)) interacts with ATP. Asp-280, Glu-293, and Asn-295 together coordinate Mg(2+).

Belongs to the D-alanine--D-alanine ligase family. Requires Mg(2+) as cofactor. The cofactor is Mn(2+).

It is found in the cytoplasm. The enzyme catalyses 2 D-alanine + ATP = D-alanyl-D-alanine + ADP + phosphate + H(+). Its pathway is cell wall biogenesis; peptidoglycan biosynthesis. Cell wall formation. In Aliivibrio fischeri (strain MJ11) (Vibrio fischeri), this protein is D-alanine--D-alanine ligase.